We begin with the raw amino-acid sequence, 497 residues long: Validamine 7-phosphate valienyltransferase (497 aa).

Residue Asp158 participates in GDP-valienol binding. His182 contacts validamine 7-phosphate. GDP-valienol is bound by residues Arg290, Lys295, Arg321, 325 to 326, 361 to 362, and Thr366; these read NR and ND. 383 to 386 is a validamine 7-phosphate binding site; sequence DGQN. Residues 387-388 and Glu391 each bind GDP-valienol; that span reads LS.

This sequence belongs to the glycosyltransferase 20 family. In terms of assembly, homodimer.

The catalysed reaction is validamine 7-phosphate + GDP-valienol = validoxylamine A 7'-phosphate + GDP + H(+). In terms of biological role, involved in the biosynthesis of the antifungal agent validamycin A. Catalyzes the condensation between GDP-valienol and validamine 7-phosphate via a nonglycosidic C-N bond formation to yield validoxylamine A 7'-phosphate. In Streptomyces hygroscopicus subsp. limoneus, this protein is Validamine 7-phosphate valienyltransferase.